We begin with the raw amino-acid sequence, 116 residues long: Putative pterin-4-alpha-carbinolamine dehydratase (116 aa).

Belongs to the pterin-4-alpha-carbinolamine dehydratase family.

It catalyses the reaction (4aS,6R)-4a-hydroxy-L-erythro-5,6,7,8-tetrahydrobiopterin = (6R)-L-erythro-6,7-dihydrobiopterin + H2O. This Xylella fastidiosa (strain 9a5c) protein is Putative pterin-4-alpha-carbinolamine dehydratase.